The primary structure comprises 508 residues: MARPALAASLEAVLGDRGNANRVFEILELLAAKEEEDVLCAARTCRRLFAALLRRGELFAGSLPAEEDALRGNYSAEEKYKIWMRHRYNDCVESLSELLGHDSFQVKESSLCTLMKFVELEAECPLVAEQWKGSIAFPRHLLKVVVNGLIPIHEDASLLISRFQEYMEYEDVRYFVMKVVTESIGQVMQKIKERPLPFYQQNVFSLISPINMPNKERDMVKFMMKQDNREEWKVSKLQAHKQAFERMWLTFLKHQLPSGLYKKVLVILHDSILPYMNEPTLMIDFLTVAYGVGGAISLLALNGLFILIHQHNLEYPDFYKKLYSLLDPSIYHVKYRARFFHLADLFLSSSHLPAYLVAAFIKRLSRLALTAPPEALLMVIPFICNLFRRHPACKVLMHRPNGPQDLSEDPYIMEQEEPSESRALESSLWELQSLQNHYHPDVAQAAAILNQSLSEIEDDISGLLELSASELFDKEIKKTSANVPLEFEQVRGLFGKKNDIIAEHFALD.

The next 3 helical transmembrane spans lie at 288-308, 341-361, and 367-387; these read VAYGVGGAISLLALNGLFILI, HLADLFLSSSHLPAYLVAAFI, and LALTAPPEALLMVIPFICNLF.

This sequence belongs to the CBF/MAK21 family.

Its subcellular location is the nucleus membrane. It localises to the nucleus. It is found in the nucleolus. In Gallus gallus (Chicken), this protein is Nucleolar complex protein 4 homolog (NOC4L).